The chain runs to 311 residues: NAD kinase (311 aa).

Aspartate 89 functions as the Proton acceptor in the catalytic mechanism. NAD(+)-binding positions include 89 to 90 (DG), arginine 94, 163 to 164 (NE), aspartate 193, and 204 to 209 (TAYAFS).

This sequence belongs to the NAD kinase family. A divalent metal cation is required as a cofactor.

The protein resides in the cytoplasm. It catalyses the reaction NAD(+) + ATP = ADP + NADP(+) + H(+). Involved in the regulation of the intracellular balance of NAD and NADP, and is a key enzyme in the biosynthesis of NADP. Catalyzes specifically the phosphorylation on 2'-hydroxyl of the adenosine moiety of NAD to yield NADP. In Mycobacterium leprae (strain Br4923), this protein is NAD kinase.